Consider the following 273-residue polypeptide: 3-methyl-2-oxobutanoate hydroxymethyltransferase (273 aa).

Residues aspartate 49 and aspartate 88 each coordinate Mg(2+). 3-methyl-2-oxobutanoate is bound by residues 49 to 50 (DS), aspartate 88, and lysine 118. Glutamate 120 is a Mg(2+) binding site. Glutamate 187 functions as the Proton acceptor in the catalytic mechanism.

Belongs to the PanB family. As to quaternary structure, homodecamer; pentamer of dimers. Mg(2+) serves as cofactor.

The protein localises to the cytoplasm. The enzyme catalyses 3-methyl-2-oxobutanoate + (6R)-5,10-methylene-5,6,7,8-tetrahydrofolate + H2O = 2-dehydropantoate + (6S)-5,6,7,8-tetrahydrofolate. It participates in cofactor biosynthesis; (R)-pantothenate biosynthesis; (R)-pantoate from 3-methyl-2-oxobutanoate: step 1/2. Catalyzes the reversible reaction in which hydroxymethyl group from 5,10-methylenetetrahydrofolate is transferred onto alpha-ketoisovalerate to form ketopantoate. The chain is 3-methyl-2-oxobutanoate hydroxymethyltransferase from Sinorhizobium fredii (strain NBRC 101917 / NGR234).